Reading from the N-terminus, the 123-residue chain is Large ribosomal subunit protein bL12 (123 aa).

It belongs to the bacterial ribosomal protein bL12 family. Homodimer. Part of the ribosomal stalk of the 50S ribosomal subunit. Forms a multimeric L10(L12)X complex, where L10 forms an elongated spine to which 2 to 4 L12 dimers bind in a sequential fashion. Binds GTP-bound translation factors.

Its function is as follows. Forms part of the ribosomal stalk which helps the ribosome interact with GTP-bound translation factors. Is thus essential for accurate translation. The sequence is that of Large ribosomal subunit protein bL12 from Acholeplasma laidlawii (strain PG-8A).